The following is a 214-amino-acid chain: FMN-dependent NADH:quinone oxidoreductase 1 (214 aa).

Residues 17-19 (SWS) and 144-147 (SAGG) each bind FMN.

This sequence belongs to the azoreductase type 1 family. Homodimer. The cofactor is FMN.

It carries out the reaction 2 a quinone + NADH + H(+) = 2 a 1,4-benzosemiquinone + NAD(+). The catalysed reaction is N,N-dimethyl-1,4-phenylenediamine + anthranilate + 2 NAD(+) = 2-(4-dimethylaminophenyl)diazenylbenzoate + 2 NADH + 2 H(+). In terms of biological role, quinone reductase that provides resistance to thiol-specific stress caused by electrophilic quinones. Also exhibits azoreductase activity. Catalyzes the reductive cleavage of the azo bond in aromatic azo compounds to the corresponding amines. This chain is FMN-dependent NADH:quinone oxidoreductase 1, found in Lactococcus lactis subsp. lactis (strain IL1403) (Streptococcus lactis).